A 377-amino-acid polypeptide reads, in one-letter code: Putative holocytochrome-c synthase (377 aa).

Disordered regions lie at residues 1 to 29 and 111 to 136; these read MTSS…SNEA and QNSE…KPAG. Residues 7-22 show a composition bias toward basic and acidic residues; the sequence is TTDHPRTGKCPIDHSK. HRM repeat units lie at residues 114–119 and 124–129; these read EATPAV and TCPMSN.

The protein belongs to the cytochrome c-type heme lyase family.

The protein localises to the mitochondrion inner membrane. The protein resides in the mitochondrion intermembrane space. The enzyme catalyses holo-[cytochrome c] = apo-[cytochrome c] + heme b. Functionally, lyase that catalyzes the covalent linking of the heme group to the cytochrome C apoprotein to produce the mature functional cytochrome. The protein is Putative holocytochrome-c synthase of Schizosaccharomyces pombe (strain 972 / ATCC 24843) (Fission yeast).